A 467-amino-acid polypeptide reads, in one-letter code: ATP synthase subunit beta (467 aa).

Residue 156–163 participates in ATP binding; the sequence is GGAGVGKT.

This sequence belongs to the ATPase alpha/beta chains family. F-type ATPases have 2 components, CF(1) - the catalytic core - and CF(0) - the membrane proton channel. CF(1) has five subunits: alpha(3), beta(3), gamma(1), delta(1), epsilon(1). CF(0) has three main subunits: a(1), b(2) and c(9-12). The alpha and beta chains form an alternating ring which encloses part of the gamma chain. CF(1) is attached to CF(0) by a central stalk formed by the gamma and epsilon chains, while a peripheral stalk is formed by the delta and b chains.

It localises to the cell inner membrane. It carries out the reaction ATP + H2O + 4 H(+)(in) = ADP + phosphate + 5 H(+)(out). Functionally, produces ATP from ADP in the presence of a proton gradient across the membrane. The catalytic sites are hosted primarily by the beta subunits. The polypeptide is ATP synthase subunit beta (Cupriavidus taiwanensis (strain DSM 17343 / BCRC 17206 / CCUG 44338 / CIP 107171 / LMG 19424 / R1) (Ralstonia taiwanensis (strain LMG 19424))).